The sequence spans 60 residues: Large ribosomal subunit protein bL32 (60 aa).

The protein belongs to the bacterial ribosomal protein bL32 family.

The protein is Large ribosomal subunit protein bL32 of Borreliella afzelii (strain PKo) (Borrelia afzelii).